The following is a 315-amino-acid chain: Probable cell division protein WhiA (315 aa).

Positions 280 to 313 (SLKELGQMLDPQVGKSGINHRLRKIEKIAEELRT) form a DNA-binding region, H-T-H motif.

This sequence belongs to the WhiA family.

Functionally, involved in cell division and chromosome segregation. This is Probable cell division protein WhiA from Clostridium botulinum (strain Alaska E43 / Type E3).